The sequence spans 310 residues: MIIVTGGAGFIGSNIVKALNDKGITDILVVDNLKDGTKFVNLVDLNIADYMDKEDFLIQIMAGEEFGEIEAIFHEGACSSTTEWDGKYMMDNNYQYSKELLHYCLEREIPFLYASSAATYGGRTSDFIESREYEQPLNVYGYSKFLFDEYVRQILPEANSQIVGFRYFNVYGPREGHKGSMASVAFHLNTQLNNGESPKLFEGSDGFKRDFVYVGDVADVNLWFWENGVSGIFNLGTGRAESFQAVADATLAFHKKGSIEYIPFPDKLKGRYQAFTQADLTNLRKAGYDKPFKTVAEGVTEYMAWLNRDA.

NADP(+) contacts are provided by residues 10–11, 31–32, Lys-38, Lys-53, 75–79, and Asn-92; these read FI, DN, and EGACS. Tyr-140 acts as the Proton acceptor in catalysis. Lys-144 contacts NADP(+). Asn-169 is a substrate binding site. Positions 170 and 178 each coordinate NADP(+). Lys-178 acts as the Proton acceptor in catalysis. Substrate-binding positions include Ser-180, His-187, 201-204, Arg-209, and Tyr-272; that span reads FEGS.

The protein belongs to the NAD(P)-dependent epimerase/dehydratase family. HldD subfamily. Homopentamer. NADP(+) is required as a cofactor.

It catalyses the reaction ADP-D-glycero-beta-D-manno-heptose = ADP-L-glycero-beta-D-manno-heptose. The protein operates within nucleotide-sugar biosynthesis; ADP-L-glycero-beta-D-manno-heptose biosynthesis; ADP-L-glycero-beta-D-manno-heptose from D-glycero-beta-D-manno-heptose 7-phosphate: step 4/4. In terms of biological role, catalyzes the interconversion between ADP-D-glycero-beta-D-manno-heptose and ADP-L-glycero-beta-D-manno-heptose via an epimerization at carbon 6 of the heptose. In Klebsiella pneumoniae (strain 342), this protein is ADP-L-glycero-D-manno-heptose-6-epimerase.